The primary structure comprises 254 residues: Bowman-Birk type bran trypsin inhibitor (254 aa).

Residues 1-22 form the signal peptide; it reads MSNTTMATSTILLFLLAGLAAA. A propeptide spanning residues 23 to 118 is cleaved from the precursor; that stretch reads HGDGDTTIRL…KCTAALDGLS (96 aa). 3 repeats span residues 46-120, 121-187, and 188-251; these read KPWD…LSME, RPWK…LCTP, and RPWG…CKPR. Intrachain disulfides connect Cys-51-Cys-248, Cys-125-Cys-185, Cys-126-Cys-143, Cys-152-Cys-159, Cys-156-Cys-172, Cys-193-Cys-248, Cys-194-Cys-209, Cys-199-Cys-207, Cys-216-Cys-223, and Cys-220-Cys-236. Residues 252 to 254 constitute a propeptide that is removed on maturation; the sequence is AEN.

Belongs to the Bowman-Birk serine protease inhibitor family. As to expression, expressed in roots, leaves and flowers.

In Oryza sativa subsp. indica (Rice), this protein is Bowman-Birk type bran trypsin inhibitor (RBBI3.3).